Here is a 123-residue protein sequence, read N- to C-terminus: Unknown 12C protein (123 aa).

The N-terminal stretch at 1–17 (MMSALFLVLSVSLLVSG) is a signal peptide.

In terms of processing, contains 6 disulfide bonds. As to expression, expressed in acontia, a specialised envenomation structure laden with batteries of venom-containing nematocysts found only in the superfamily Metridioidea.

The protein resides in the secreted. It is found in the nematocyst. Functionally, cysteine-rich protein with probable toxin activity. This Calliactis polypus (Hermit crab anemone) protein is Unknown 12C protein.